The sequence spans 82 residues: Mu-conotoxin MrVIA (82 aa).

The signal sequence occupies residues 1–22 (MKLTCMMIVAVLFLTAWTLVMA). Residues 23–49 (DDSNNGLANHFSKSRDEMEDPEASKLE) constitute a propeptide that is removed on maturation. Intrachain disulfides connect cysteine 53/cysteine 71, cysteine 60/cysteine 76, and cysteine 70/cysteine 81.

In terms of tissue distribution, expressed by the venom duct.

The protein localises to the secreted. Its function is as follows. MuO-conotoxins are gating-modifier toxins that inhibit sodium current by trapping the domain II voltage sensor in the closed position to prevent opening of the sodium channel. This toxin inhibits rNav1.2/SCN2A (IC(50)=532 nM), rNav1.4/SCN4A (IC(50)=438 nM) and rNav1.7/SCN9A (IC(50)=345 nM). It blocks Nav channels by interacting mainly with the C-terminal part of the pore loop of domain-3. It does not bind on site 1. At small concentration, this toxin also acts as a calcium current agonist, whereas at higher doses it blocks fast-inactivating calcium current. This is Mu-conotoxin MrVIA from Conus marmoreus (Marble cone).